A 110-amino-acid polypeptide reads, in one-letter code: Large ribosomal subunit protein uL23c (110 aa).

It belongs to the universal ribosomal protein uL23 family. As to quaternary structure, part of the 50S ribosomal subunit.

It localises to the plastid. The protein localises to the chloroplast. In terms of biological role, binds to 23S rRNA. In Porphyra purpurea (Red seaweed), this protein is Large ribosomal subunit protein uL23c (rpl23).